Reading from the N-terminus, the 159-residue chain is Sperm acrosome-associated protein 5 (159 aa).

The signal sequence occupies residues 1-21 (MKAWGTVVVTLATLMVVTVDA). In terms of domain architecture, C-type lysozyme spans 22 to 150 (KIYERCELAA…SEWLKGCDMH (129 aa)). Cystine bridges form between Cys-27–Cys-147, Cys-51–Cys-135, Cys-85–Cys-100, and Cys-96–Cys-114. The active site involves Glu-56.

The protein belongs to the glycosyl hydrolase 22 family.

The protein resides in the secreted. The enzyme catalyses Hydrolysis of (1-&gt;4)-beta-linkages between N-acetylmuramic acid and N-acetyl-D-glucosamine residues in a peptidoglycan and between N-acetyl-D-glucosamine residues in chitodextrins.. In Homo sapiens (Human), this protein is Sperm acrosome-associated protein 5 (SPACA5).